The chain runs to 434 residues: Serine hydroxymethyltransferase (434 aa).

(6S)-5,6,7,8-tetrahydrofolate is bound by residues L131 and 135 to 137 (GHL). K240 bears the N6-(pyridoxal phosphate)lysine mark.

Belongs to the SHMT family. Homodimer. Requires pyridoxal 5'-phosphate as cofactor.

It localises to the cytoplasm. It carries out the reaction (6R)-5,10-methylene-5,6,7,8-tetrahydrofolate + glycine + H2O = (6S)-5,6,7,8-tetrahydrofolate + L-serine. It functions in the pathway one-carbon metabolism; tetrahydrofolate interconversion. It participates in amino-acid biosynthesis; glycine biosynthesis; glycine from L-serine: step 1/1. Its function is as follows. Catalyzes the reversible interconversion of serine and glycine with tetrahydrofolate (THF) serving as the one-carbon carrier. This reaction serves as the major source of one-carbon groups required for the biosynthesis of purines, thymidylate, methionine, and other important biomolecules. Also exhibits THF-independent aldolase activity toward beta-hydroxyamino acids, producing glycine and aldehydes, via a retro-aldol mechanism. The protein is Serine hydroxymethyltransferase of Gluconobacter oxydans (strain 621H) (Gluconobacter suboxydans).